The primary structure comprises 380 residues: Flap endonuclease 1-A (380 aa).

The interval 1–105 (MGIKGLTKLL…QELAKRYSKR (105 aa)) is N-domain. A Mg(2+)-binding site is contributed by Asp34. Arg71 provides a ligand contact to DNA. Mg(2+) is bound by residues Asp87, Glu159, Glu161, Asp180, and Asp182. Residues 123–254 (AIEKFSKRTV…QTALKLIRQH (132 aa)) form an I-domain region. Glu159 lines the DNA pocket. Gly232 and Asp234 together coordinate DNA. Asp234 serves as a coordination point for Mg(2+). Residues 336–344 (SQGRLESFF) are interaction with PCNA. Residues 351–380 (SVPLKRKDTSEKPTKAVANKKTKGAGGKKK) are disordered. The span at 355 to 364 (KRKDTSEKPT) shows a compositional bias: basic and acidic residues. The segment covering 368–380 (ANKKTKGAGGKKK) has biased composition (basic residues).

It belongs to the XPG/RAD2 endonuclease family. FEN1 subfamily. As to quaternary structure, interacts with PCNA. Three molecules of FEN1 bind to one PCNA trimer with each molecule binding to one PCNA monomer. PCNA stimulates the nuclease activity without altering cleavage specificity. Mg(2+) serves as cofactor. Phosphorylated. Phosphorylation upon DNA damage induces relocalization to the nuclear plasma. As to expression, strongly expressed in proliferating tissues: root and shoot apical meristem, tiller bud, leaf, ligule primordia, marginal meristem of young leaves and panicles. Not expressed in mature leaves when exposed to UV.

The protein resides in the nucleus. It is found in the nucleolus. Its subcellular location is the nucleoplasm. The protein localises to the mitochondrion. Its activity is regulated as follows. Inhibited by NaCl. Its function is as follows. Structure-specific nuclease with 5'-flap endonuclease and 5'-3' exonuclease activities involved in DNA replication and repair. During DNA replication, cleaves the 5'-overhanging flap structure that is generated by displacement synthesis when DNA polymerase encounters the 5'-end of a downstream Okazaki fragment. It enters the flap from the 5'-end and then tracks to cleave the flap base, leaving a nick for ligation. Also involved in the long patch base excision repair (LP-BER) pathway, by cleaving within the apurinic/apyrimidinic (AP) site-terminated flap. Acts as a genome stabilization factor that prevents flaps from equilibrating into structures that lead to duplications and deletions. Also possesses 5'-3' exonuclease activity on nicked or gapped double-stranded DNA, and exhibits RNase H activity. Also involved in replication and repair of rDNA and in repairing mitochondrial DNA. May be required for cell proliferation. The protein is Flap endonuclease 1-A of Oryza sativa subsp. japonica (Rice).